The sequence spans 287 residues: 4-hydroxybenzoate octaprenyltransferase (287 aa).

Transmembrane regions (helical) follow at residues 21 to 41, 44 to 64, 91 to 111, 112 to 132, 139 to 159, 160 to 180, 211 to 231, 235 to 255, and 263 to 283; these read VGIF…AKGA, FKIA…GCIV, VTEA…LVLL, LNRL…VYPF, LPQL…FAAT, VGHV…WPIV, LMIG…GWYL, YWFY…QFLI, and CFAA…GILL.

It belongs to the UbiA prenyltransferase family. It depends on Mg(2+) as a cofactor.

The protein localises to the cell inner membrane. It carries out the reaction all-trans-octaprenyl diphosphate + 4-hydroxybenzoate = 4-hydroxy-3-(all-trans-octaprenyl)benzoate + diphosphate. Its pathway is cofactor biosynthesis; ubiquinone biosynthesis. Functionally, catalyzes the prenylation of para-hydroxybenzoate (PHB) with an all-trans polyprenyl group. Mediates the second step in the final reaction sequence of ubiquinone-8 (UQ-8) biosynthesis, which is the condensation of the polyisoprenoid side chain with PHB, generating the first membrane-bound Q intermediate 3-octaprenyl-4-hydroxybenzoate. This is 4-hydroxybenzoate octaprenyltransferase from Coxiella burnetii (strain RSA 331 / Henzerling II).